The sequence spans 394 residues: Phosphoglycerate kinase (394 aa).

Substrate contacts are provided by residues 21–23 (DFN), arginine 36, 59–62 (HLGR), arginine 118, and arginine 151. Phosphoserine is present on serine 183. Residues lysine 201 and glycine 292 each contribute to the ATP site. Threonine 299 bears the Phosphothreonine mark. ATP contacts are provided by residues glutamate 323 and 350 to 353 (GGDS).

This sequence belongs to the phosphoglycerate kinase family. Monomer.

It localises to the cytoplasm. The catalysed reaction is (2R)-3-phosphoglycerate + ATP = (2R)-3-phospho-glyceroyl phosphate + ADP. It functions in the pathway carbohydrate degradation; glycolysis; pyruvate from D-glyceraldehyde 3-phosphate: step 2/5. The polypeptide is Phosphoglycerate kinase (Bacillus cereus (strain G9842)).